Here is a 638-residue protein sequence, read N- to C-terminus: Chaperone protein DnaK (638 aa).

Threonine 199 is modified (phosphothreonine; by autocatalysis). A compositionally biased stretch (low complexity) spans 603 to 618 (YAQPGAEAGAEQQGSA). Positions 603–638 (YAQPGAEAGAEQQGSANNADDDIVDAEFEEVNDDKK) are disordered. The span at 621-638 (ADDDIVDAEFEEVNDDKK) shows a compositional bias: acidic residues.

It belongs to the heat shock protein 70 family.

Acts as a chaperone. This chain is Chaperone protein DnaK, found in Hydrogenovibrio crunogenus (strain DSM 25203 / XCL-2) (Thiomicrospira crunogena).